We begin with the raw amino-acid sequence, 111 residues long: Photosystem II reaction center Psb28 protein (111 aa).

This sequence belongs to the Psb28 family. In terms of assembly, part of the photosystem II complex.

It is found in the cellular thylakoid membrane. The sequence is that of Photosystem II reaction center Psb28 protein from Acaryochloris marina (strain MBIC 11017).